A 276-amino-acid chain; its full sequence is Phosphonates import ATP-binding protein PhnC (276 aa).

The region spanning Leu2–Asp246 is the ABC transporter domain. Position 35 to 42 (Gly35 to Ser42) interacts with ATP.

The protein belongs to the ABC transporter superfamily. Phosphonates importer (TC 3.A.1.9.1) family. As to quaternary structure, the complex is composed of two ATP-binding proteins (PhnC), two transmembrane proteins (PhnE) and a solute-binding protein (PhnD).

It localises to the cell inner membrane. It carries out the reaction phosphonate(out) + ATP + H2O = phosphonate(in) + ADP + phosphate + H(+). In terms of biological role, part of the ABC transporter complex PhnCDE involved in phosphonates import. Responsible for energy coupling to the transport system. The chain is Phosphonates import ATP-binding protein PhnC from Alcaligenes faecalis.